The primary structure comprises 256 residues: Membrane-anchored junction protein (256 aa).

Residues 1 to 232 (MSLKPFTYPF…HSSPPPPKEP (232 aa)) are Nuclear-facing. Disordered regions lie at residues 143–197 (KRKL…TPAS) and 211–235 (HGLQ…PGAR). Positions 164 to 173 (ETSSEASSNK) are enriched in polar residues. Over residues 175-184 (PLKESKRSTD) the composition is skewed to basic and acidic residues. A helical membrane pass occupies residues 233 to 251 (GARGFLGFLSALFPFRYFF). Over 252–256 (KKSGQ) the chain is Perinuclear space.

The protein belongs to the MAJIN family. As to quaternary structure, component of the MAJIN-TERB1-TERB2 complex, composed of MAJIN, TERB1 and TERB2. In terms of tissue distribution, specifically expressed in germline tissues.

It is found in the nucleus inner membrane. The protein localises to the chromosome. Its subcellular location is the telomere. Functionally, meiosis-specific telomere-associated protein involved in meiotic telomere attachment to the nucleus inner membrane, a crucial step for homologous pairing and synapsis. Component of the MAJIN-TERB1-TERB2 complex, which promotes telomere cap exchange by mediating attachment of telomeric DNA to the inner nuclear membrane and replacement of the protective cap of telomeric chromosomes: in early meiosis, the MAJIN-TERB1-TERB2 complex associates with telomeric DNA and the shelterin/telosome complex. During prophase, the complex matures and promotes release of the shelterin/telosome complex from telomeric DNA. In the complex, MAJIN acts as the anchoring subunit to the nucleus inner membrane. MAJIN shows DNA-binding activity, possibly for the stabilization of telomere attachment on the nucleus inner membrane. The sequence is that of Membrane-anchored junction protein from Mus musculus (Mouse).